We begin with the raw amino-acid sequence, 381 residues long: E3 ubiquitin-protein ligase At1g63170 (381 aa).

Positions 1–23 (MSRETTTEATPLILTDGGGGRRS) are disordered. 2 helical membrane passes run 74–94 (VVVL…AVLV) and 107–127 (VWII…CVEY). Residues 135–161 (RRDLSPRSSSSSSSSSSSMDEEEGLGL) form a disordered region. Residues 140–152 (PRSSSSSSSSSSS) show a composition bias toward low complexity. A coiled-coil region spans residues 170-194 (LELGQLENENNSFAKHLESANTMIS). Helical transmembrane passes span 189–209 (ANTM…SSGG), 224–244 (IVFL…ACVI), and 245–265 (GIAV…VAEQ). Residues 325-366 (CCICLSAYEDETELRELPCGHHFHCGCVDKWLYINATCPLCK) form an RING-type; atypical zinc finger.

It is found in the membrane. It catalyses the reaction S-ubiquitinyl-[E2 ubiquitin-conjugating enzyme]-L-cysteine + [acceptor protein]-L-lysine = [E2 ubiquitin-conjugating enzyme]-L-cysteine + N(6)-ubiquitinyl-[acceptor protein]-L-lysine.. The protein operates within protein modification; protein ubiquitination. Mediates E2-dependent protein ubiquitination. The polypeptide is E3 ubiquitin-protein ligase At1g63170 (Arabidopsis thaliana (Mouse-ear cress)).